The sequence spans 310 residues: Olfactory receptor 5T7 (310 aa).

Residues 1–23 (MENITEVTEFILMGFTDNADLEI) lie on the Extracellular side of the membrane. Asparagine 3 is a glycosylation site (N-linked (GlcNAc...) asparagine). The helical transmembrane segment at 24–44 (LSFFLFLAIYLFTLMGNLGLI) threads the bilayer. At 45–52 (TLVIGDSR) the chain is on the cytoplasmic side. Residues 53-73 (LHNPMYYFLSVLSSVDACYST) traverse the membrane as a helical segment. Residues 74 to 97 (VITPQMVVDFVSEKKVISFIGCAT) lie on the Extracellular side of the membrane. An intrachain disulfide couples cysteine 95 to cysteine 187. Residues 98 to 118 (QMFLAVTFGTTECFLLAAMAY) traverse the membrane as a helical segment. Residues 119 to 131 (DRYVAIHNPLMYV) lie on the Cytoplasmic side of the membrane. Residues 132–152 (VSMSPRVYVPLIIASYAGGIL) form a helical membrane-spanning segment. Over 153 to 194 (HAVIHTVATFRLSFCGSNKISHIFCDIPPLLAISCSDTHFNQ) the chain is Extracellular. Residues 195 to 215 (LLLFYCAGFIEVVTILIVLLS) traverse the membrane as a helical segment. The Cytoplasmic portion of the chain corresponds to 216 to 235 (YGFILSVILKTRSTEGKRKV). The helical transmembrane segment at 236–256 (FSTCGSHLMAVSTFHGTVLFM) threads the bilayer. The Extracellular segment spans residues 257-269 (YVRPSDSYALEHD). The helical transmembrane segment at 270–290 (MMVSIFYSIVIPMLNPLIYSL) threads the bilayer. The Cytoplasmic segment spans residues 291–310 (RNKDVKEAIKKVFGKRILCG).

It belongs to the G-protein coupled receptor 1 family.

It is found in the cell membrane. Functionally, potential odorant receptor. This chain is Olfactory receptor 5T7, found in Mus musculus (Mouse).